The primary structure comprises 1199 residues: MLMSADSSDSAKTSVICSTVSASMLAPPAPEQPSTTAPPILGVTGRSHLENALKLPPNTSVSAYYQHNSKLGMGQNYNPEFRSLVAPVTDLDTVPPTGVTMASSSNSPNSSVKLPHSGVIFVSKSSAVSTTDGPTAVLQQQQPQQQMPQHFESLPHHHPQQEHQPQQQQQQHHLQHHPHPHVMYPHGYQQANLHHSGGIAVVPADSRPQTPEYIKSYPVMDTTVASSVKGEPELNIEFDGTTVLCRVCGDKASGFHYGVHSCEGCKGFFRRSIQQKIQYRPCTKNQQCSILRINRNRCQYCRLKKCIAVGMSRDAVRFGRVPKREKARILAAMQQSTQNRGQQRALATELDDQPRLLAAVLRAHLETCEFTKEKVSAMRQRARDCPSYSMPTLLACPLNPAPELQSEQEFSQRFAHVIRGVIDFAGMIPGFQLLTQDDKFTLLKAGLFDALFVRLICMFDSSINSIICLNGQVMRRDAIQNGANARFLVDSTFNFAERMNSMNLTDAEIGLFCAIVLITPDRPGLRNLELIEKMYSRLKGCLQYIVAQNRPDQPEFLAKLLETMPDLRTLSTLHTEKLVVFRTEHKELLRQQMWSMEDGNNSDGQQNKSPSGSWADAMDVEAAKSPLGSVSSTESADLDYGSPSSSQPQGVSLPSPPQQQPSALASSAPLLAATLSGGCPLRNRANSGSSGDSGAAEMDIVGSHAHLTQNGLTITPIVRHQQQQQQQQQIGILNNAHSRNLNGGHAMCQQQQQHPQLHHHLTAGAARYRKLDSPTDSGIESGNEKNECKAVSSGGSSSCSSPRSSVDDALDCSDAAANHNQVVQHPQLSVVSVSPVRSPQPSTSSHLKRQIVEDMPVLKRVLQAPPLYDTNSLMDEAYKPHKKFRALRHREFETAEADASSSTSGSNSLSAGSPRQSPVPNSVATPPPSAASAAAGNPAQSQLHMHLTRSSPKASMASSHSVLAKSLMAEPRMTPEQMKRSDIIQNYLKRENSTAASSTTNGVGNRSPSSSSTPPPSAVQNQQRWGSSSVITTTCQQRQQSVSPHSNGSSSSSSSSSSSSSSSSSTSSNCSSSSASSCQYFQSPHSTSNGTSAPASSSSGSNSATPLLELQVDIADSAQPLNLSKKSPTPPPSKLHALVAAANAVQRYPTLSADVTVTASNGGPPSAAASPAPSSSPPASVGSPNPGLSAAVHKVMLEA.

Residues 130–182 are disordered; sequence TTDGPTAVLQQQQPQQQMPQHFESLPHHHPQQEHQPQQQQQQHHLQHHPHPHV. 2 stretches are compositionally biased toward low complexity: residues 139–149 and 162–172; these read QQQQPQQQMPQ and EHQPQQQQQQH. Positions 242-318 form a DNA-binding region, nuclear receptor; it reads TVLCRVCGDK…VGMSRDAVRF (77 aa). 2 NR C4-type zinc fingers span residues 245–265 and 282–306; these read CRVC…CEGC and CTKN…LKKC. The NR LBD domain occupies 352-600; that stretch reads DQPRLLAAVL…QQMWSMEDGN (249 aa). Disordered stretches follow at residues 624 to 665, 771 to 808, 831 to 851, 895 to 961, 991 to 1104, and 1155 to 1188; these read KSPL…SALA, LDSP…SVDD, VSVS…KRQI, AEAD…SSHS, ENST…SNSA, and VTVT…NPGL. Low complexity-rich tracts occupy residues 641–653, 792–804, 831–845, 897–942, and 950–961; these read GSPS…GVSL, SSGG…SPRS, VSVS…STSS, ADAS…AQSQ, and SSPKASMASSHS. Polar residues-rich tracts occupy residues 993–1006 and 1018–1040; these read STAA…VGNR and AVQN…QRQQ. Composition is skewed to low complexity over residues 1041–1077, 1086–1104, and 1159–1187; these read SVSP…SASS, STSN…SNSA, and ASNG…PNPG.

Belongs to the nuclear hormone receptor family. NR1 subfamily.

The protein resides in the nucleus. Functionally, implicated in the regulation of ecdysone-triggered gene hierarchies. Probably plays a key role in mediating the regulation of the larval molt by 20-OH-ecdysone. The polypeptide is Ecdysone-induced protein 75B, isoforms C/D (Eip75B) (Drosophila melanogaster (Fruit fly)).